The chain runs to 861 residues: Cone cGMP-specific 3',5'-cyclic phosphodiesterase subunit alpha' (861 aa).

GAF domains follow at residues 75–224 (SAEQ…AVAL) and 256–433 (DVER…GWSL). Residues serine 97, asparagine 116, 169 to 172 (DKQT), and threonine 176 each bind 3',5'-cyclic GMP. Residues 486–819 (EERQLLAILK…VEWKSLAEEY (334 aa)) form the PDEase domain. The Proton donor role is filled by histidine 562. 4 residues coordinate a divalent metal cation: histidine 566, histidine 602, aspartate 603, and aspartate 723. The segment covering 826–839 (TEEEAGKQEEEASD) has biased composition (basic and acidic residues). The interval 826–861 (TEEEAGKQEEEASDGKAATDLGGSAEDKKSKTCLML) is disordered. A Cysteine methyl ester modification is found at cysteine 858. A lipid anchor (S-geranylgeranyl cysteine) is attached at cysteine 858. Positions 859–861 (LML) are cleaved as a propeptide — removed in mature form.

This sequence belongs to the cyclic nucleotide phosphodiesterase family. Composed of two alpha' subunits that are associated with 3 smaller proteins of 11, 13, and 15 kDa. A divalent metal cation is required as a cofactor.

Its subcellular location is the cell membrane. The enzyme catalyses 3',5'-cyclic GMP + H2O = GMP + H(+). In terms of biological role, as cone-specific cGMP phosphodiesterase, it plays an essential role in light detection and cone phototransduction by rapidly decreasing intracellular levels of cGMP. The sequence is that of Cone cGMP-specific 3',5'-cyclic phosphodiesterase subunit alpha' (Pde6c) from Mus musculus (Mouse).